Reading from the N-terminus, the 305-residue chain is 3-methyl-2-oxobutanoate hydroxymethyltransferase (305 aa).

The Mg(2+) site is built by aspartate 52 and aspartate 95. Residues 52-53, aspartate 95, and lysine 125 each bind 3-methyl-2-oxobutanoate; that span reads DS. Position 127 (glutamate 127) interacts with Mg(2+). Catalysis depends on glutamate 194, which acts as the Proton acceptor.

It belongs to the PanB family. In terms of assembly, homodecamer; pentamer of dimers. The cofactor is Mg(2+).

It localises to the cytoplasm. It carries out the reaction 3-methyl-2-oxobutanoate + (6R)-5,10-methylene-5,6,7,8-tetrahydrofolate + H2O = 2-dehydropantoate + (6S)-5,6,7,8-tetrahydrofolate. The protein operates within cofactor biosynthesis; (R)-pantothenate biosynthesis; (R)-pantoate from 3-methyl-2-oxobutanoate: step 1/2. Catalyzes the reversible reaction in which hydroxymethyl group from 5,10-methylenetetrahydrofolate is transferred onto alpha-ketoisovalerate to form ketopantoate. The polypeptide is 3-methyl-2-oxobutanoate hydroxymethyltransferase (Anaeromyxobacter sp. (strain Fw109-5)).